The chain runs to 286 residues: Glucose import system permease protein GlcT (286 aa).

6 consecutive transmembrane segments (helical) span residues Thr-6–Trp-26, Val-71–Leu-91, Ile-103–Phe-123, Leu-154–Phe-174, Ile-199–Ser-219, and Val-260–Ile-280. Residues Leu-63–Tyr-275 enclose the ABC transmembrane type-1 domain.

This sequence belongs to the binding-protein-dependent transport system permease family. The complex is composed of two ATP-binding proteins (GlcV), two transmembrane proteins (GlcT and GlcU) and a solute-binding protein (GlcS).

It localises to the cell membrane. In terms of biological role, part of the ABC transporter complex GlcSTUV involved in glucose uptake. Responsible for the translocation of the substrate across the membrane. This Saccharolobus solfataricus (strain ATCC 35092 / DSM 1617 / JCM 11322 / P2) (Sulfolobus solfataricus) protein is Glucose import system permease protein GlcT.